We begin with the raw amino-acid sequence, 187 residues long: GTP cyclohydrolase 1 (187 aa).

Zn(2+) contacts are provided by cysteine 76, histidine 79, and cysteine 148.

The protein belongs to the GTP cyclohydrolase I family. In terms of assembly, toroid-shaped homodecamer, composed of two pentamers of five dimers.

The enzyme catalyses GTP + H2O = 7,8-dihydroneopterin 3'-triphosphate + formate + H(+). The protein operates within cofactor biosynthesis; 7,8-dihydroneopterin triphosphate biosynthesis; 7,8-dihydroneopterin triphosphate from GTP: step 1/1. This chain is GTP cyclohydrolase 1, found in Streptococcus agalactiae serotype III (strain NEM316).